A 287-amino-acid polypeptide reads, in one-letter code: Large ribosomal subunit protein uL2 (287 aa).

The tract at residues 221–287 (RGSVMNPCDH…SKRSRGGRDS (67 aa)) is disordered. The segment covering 258 to 287 (KTRKRNKPSNKFVLRKRRKTSKRSRGGRDS) has biased composition (basic residues).

This sequence belongs to the universal ribosomal protein uL2 family. In terms of assembly, part of the 50S ribosomal subunit. Forms a bridge to the 30S subunit in the 70S ribosome.

In terms of biological role, one of the primary rRNA binding proteins. Required for association of the 30S and 50S subunits to form the 70S ribosome, for tRNA binding and peptide bond formation. It has been suggested to have peptidyltransferase activity; this is somewhat controversial. Makes several contacts with the 16S rRNA in the 70S ribosome. The polypeptide is Large ribosomal subunit protein uL2 (Synechococcus sp. (strain RCC307)).